A 245-amino-acid polypeptide reads, in one-letter code: LOB domain-containing protein 16 (245 aa).

An LOB domain is found at Ser14–Ile116. Residues Tyr162–Ser183 are disordered.

It belongs to the LOB domain-containing protein family. In terms of assembly, homodimer and heterodimer with LBD18. Expressed in roots and faintly in shoots.

The protein resides in the nucleus. In terms of biological role, transcriptional activator. Involved in lateral root formation. Regulated by the transcriptional activators ARF7 and ARF19. Functions in the initiation and emergence of lateral roots, in conjunction with LBD18, downstream of ARF7 and ARF19. Acts downstream of the auxin influx carriers AUX1 and LAX1 in the regulation of lateral root initiation and development. This is LOB domain-containing protein 16 (LBD16) from Arabidopsis thaliana (Mouse-ear cress).